The following is a 53-amino-acid chain: uncharacterized protein (53 aa).

The protein localises to the plastid. Its subcellular location is the chloroplast. This is an uncharacterized protein from Guillardia theta (Cryptophyte).